A 437-amino-acid chain; its full sequence is Xylose isomerase (437 aa).

Catalysis depends on residues His101 and Asp104. Positions 232, 268, 271, 296, 307, 309, and 339 each coordinate Mg(2+).

It belongs to the xylose isomerase family. As to quaternary structure, homotetramer. Requires Mg(2+) as cofactor.

The protein localises to the cytoplasm. It carries out the reaction alpha-D-xylose = alpha-D-xylulofuranose. In Actinobacillus succinogenes (strain ATCC 55618 / DSM 22257 / CCUG 43843 / 130Z), this protein is Xylose isomerase.